Consider the following 502-residue polypeptide: Glycerol kinase (502 aa).

Threonine 14 is an ADP binding site. 3 residues coordinate ATP: threonine 14, threonine 15, and serine 16. Position 14 (threonine 14) interacts with sn-glycerol 3-phosphate. Position 18 (arginine 18) interacts with ADP. Sn-glycerol 3-phosphate is bound by residues arginine 84, glutamate 85, tyrosine 136, and aspartate 246. Positions 84, 85, 136, 246, and 247 each coordinate glycerol. ADP contacts are provided by threonine 268 and glycine 311. Residues threonine 268, glycine 311, glutamine 315, and glycine 412 each coordinate ATP. 2 residues coordinate ADP: glycine 412 and asparagine 416.

The protein belongs to the FGGY kinase family. In terms of assembly, homotetramer and homodimer (in equilibrium). Heterodimer with EIIA-Glc. Binds 1 zinc ion per glycerol kinase EIIA-Glc dimer. The zinc ion is important for dimerization.

The enzyme catalyses glycerol + ATP = sn-glycerol 3-phosphate + ADP + H(+). The protein operates within polyol metabolism; glycerol degradation via glycerol kinase pathway; sn-glycerol 3-phosphate from glycerol: step 1/1. With respect to regulation, activity of this regulatory enzyme is affected by several metabolites. Allosterically and non-competitively inhibited by fructose 1,6-bisphosphate (FBP) and unphosphorylated phosphocarrier protein EIIA-Glc (III-Glc), an integral component of the bacterial phosphotransferase (PTS) system. Its function is as follows. Key enzyme in the regulation of glycerol uptake and metabolism. Catalyzes the phosphorylation of glycerol to yield sn-glycerol 3-phosphate. This is Glycerol kinase from Enterobacter sp. (strain 638).